Here is a 313-residue protein sequence, read N- to C-terminus: GTP cyclohydrolase MptA (313 aa).

This sequence belongs to the GTP cyclohydrolase IV family. Homodimer. Fe(2+) serves as cofactor.

It carries out the reaction GTP + H2O = 7,8-dihydroneopterin 2',3'-cyclic phosphate + formate + diphosphate + H(+). It participates in cofactor biosynthesis; 5,6,7,8-tetrahydromethanopterin biosynthesis. Inhibited by GTP concentrations greater than 0.3 mM and by 2-amino-5-formylamino-6-ribofuranosylamino-4(3H)-pyrimidinone 5'-phosphate (fapyGMP). Partial inhibition is observed when 2 mM GMP, dGTP, or 7-methyl-GTP was included along with 2 mM GTP. Functionally, converts GTP to 7,8-dihydro-D-neopterin 2',3'-cyclic phosphate, the first intermediate in the biosynthesis of coenzyme methanopterin. It is also able to utilize a variety of GTP analogs as substrates, including GDP, beta,gamma-methylene-GTP and GTP-[gamma-thio]. This is GTP cyclohydrolase MptA (mptA) from Methanocaldococcus jannaschii (strain ATCC 43067 / DSM 2661 / JAL-1 / JCM 10045 / NBRC 100440) (Methanococcus jannaschii).